An 83-amino-acid polypeptide reads, in one-letter code: Small ribosomal subunit protein uS17 (83 aa).

The protein belongs to the universal ribosomal protein uS17 family. Part of the 30S ribosomal subunit.

Its function is as follows. One of the primary rRNA binding proteins, it binds specifically to the 5'-end of 16S ribosomal RNA. The sequence is that of Small ribosomal subunit protein uS17 from Gloeobacter violaceus (strain ATCC 29082 / PCC 7421).